The following is a 404-amino-acid chain: Cysteine desulfurase IscS (404 aa).

Residues 75–76 (AT), N155, Q183, and 203–205 (SAH) each bind pyridoxal 5'-phosphate. K206 carries the post-translational modification N6-(pyridoxal phosphate)lysine. T243 serves as a coordination point for pyridoxal 5'-phosphate. C328 serves as the catalytic Cysteine persulfide intermediate. C328 is a binding site for [2Fe-2S] cluster.

The protein belongs to the class-V pyridoxal-phosphate-dependent aminotransferase family. NifS/IscS subfamily. In terms of assembly, homodimer. Forms a heterotetramer with IscU, interacts with other sulfur acceptors. It depends on pyridoxal 5'-phosphate as a cofactor.

It localises to the cytoplasm. It catalyses the reaction (sulfur carrier)-H + L-cysteine = (sulfur carrier)-SH + L-alanine. It functions in the pathway cofactor biosynthesis; iron-sulfur cluster biosynthesis. Functionally, master enzyme that delivers sulfur to a number of partners involved in Fe-S cluster assembly, tRNA modification or cofactor biosynthesis. Catalyzes the removal of elemental sulfur atoms from cysteine to produce alanine. Functions as a sulfur delivery protein for Fe-S cluster synthesis onto IscU, an Fe-S scaffold assembly protein, as well as other S acceptor proteins. The polypeptide is Cysteine desulfurase IscS (Proteus mirabilis (strain HI4320)).